Here is a 156-residue protein sequence, read N- to C-terminus: Small ribosomal subunit protein uS7 (156 aa).

This sequence belongs to the universal ribosomal protein uS7 family. Part of the 30S ribosomal subunit. Contacts proteins S9 and S11.

One of the primary rRNA binding proteins, it binds directly to 16S rRNA where it nucleates assembly of the head domain of the 30S subunit. Is located at the subunit interface close to the decoding center, probably blocks exit of the E-site tRNA. This chain is Small ribosomal subunit protein uS7, found in Geotalea uraniireducens (strain Rf4) (Geobacter uraniireducens).